A 308-amino-acid polypeptide reads, in one-letter code: Pantothenate kinase (308 aa).

Residue 91 to 98 (GSVAVGKS) coordinates ATP.

It belongs to the prokaryotic pantothenate kinase family.

It localises to the cytoplasm. The catalysed reaction is (R)-pantothenate + ATP = (R)-4'-phosphopantothenate + ADP + H(+). The protein operates within cofactor biosynthesis; coenzyme A biosynthesis; CoA from (R)-pantothenate: step 1/5. This is Pantothenate kinase from Lacticaseibacillus paracasei (strain ATCC 334 / BCRC 17002 / CCUG 31169 / CIP 107868 / KCTC 3260 / NRRL B-441) (Lactobacillus paracasei).